We begin with the raw amino-acid sequence, 354 residues long: Uroporphyrinogen decarboxylase (354 aa).

Substrate contacts are provided by residues 27–31 (RQAGR), D77, Y154, T209, and H327.

It belongs to the uroporphyrinogen decarboxylase family. In terms of assembly, homodimer.

It localises to the cytoplasm. The catalysed reaction is uroporphyrinogen III + 4 H(+) = coproporphyrinogen III + 4 CO2. It functions in the pathway porphyrin-containing compound metabolism; protoporphyrin-IX biosynthesis; coproporphyrinogen-III from 5-aminolevulinate: step 4/4. Catalyzes the decarboxylation of four acetate groups of uroporphyrinogen-III to yield coproporphyrinogen-III. The sequence is that of Uroporphyrinogen decarboxylase from Escherichia coli (strain UTI89 / UPEC).